A 201-amino-acid polypeptide reads, in one-letter code: CASP-like protein 2B2 (201 aa).

The Cytoplasmic segment spans residues 1-28 (MSYLGVGVSPGNVSGSTTKMKLIDRKVR). Residues 29-49 (VTELILRCLVCVLALVAAILI) traverse the membrane as a helical segment. Topologically, residues 50–71 (ATDVQVREIFMIQKKAKFTDMK) are extracellular. Residues 72–92 (ALVLLVVVNGIAAGYSLVQAV) traverse the membrane as a helical segment. The Cytoplasmic portion of the chain corresponds to 93–108 (RCVVGLMKGRVLFSKP). A helical membrane pass occupies residues 109–129 (LAWAIFFGDQAVAYLCVAGVA). Topologically, residues 130–166 (AAAQSAAFAKLGEPELQWMKICNMYGKFCNQVGEGIA) are extracellular. A helical transmembrane segment spans residues 167–187 (SALFACIGMVLISCISAFGVF). Residues 188 to 201 (RLYGGSKSRPSSRW) lie on the Cytoplasmic side of the membrane.

The protein belongs to the Casparian strip membrane proteins (CASP) family. Homodimer and heterodimers.

It is found in the cell membrane. This is CASP-like protein 2B2 from Arabidopsis thaliana (Mouse-ear cress).